The sequence spans 598 residues: Elongation factor 4 (598 aa).

The 183-residue stretch at Lys4–Glu186 folds into the tr-type G domain. GTP is bound by residues Asp16 to Thr21 and Asn133 to Asp136.

This sequence belongs to the TRAFAC class translation factor GTPase superfamily. Classic translation factor GTPase family. LepA subfamily.

Its subcellular location is the cell inner membrane. It catalyses the reaction GTP + H2O = GDP + phosphate + H(+). Required for accurate and efficient protein synthesis under certain stress conditions. May act as a fidelity factor of the translation reaction, by catalyzing a one-codon backward translocation of tRNAs on improperly translocated ribosomes. Back-translocation proceeds from a post-translocation (POST) complex to a pre-translocation (PRE) complex, thus giving elongation factor G a second chance to translocate the tRNAs correctly. Binds to ribosomes in a GTP-dependent manner. This is Elongation factor 4 from Pseudoalteromonas atlantica (strain T6c / ATCC BAA-1087).